A 391-amino-acid chain; its full sequence is Metallophosphoesterase 1 (391 aa).

The helical transmembrane segment at T25–F45 threads the bilayer. Residues D72, D114, N152, H244, H298, and H300 each contribute to the a divalent metal cation site. Residues V352–E372 traverse the membrane as a helical segment.

It belongs to the metallophosphoesterase superfamily. MPPE1 family. Interacts with GPI-anchor proteins (via the GPI portion). Interacts with TMED10. Requires Mn(2+) as cofactor.

The protein resides in the endoplasmic reticulum-Golgi intermediate compartment membrane. In terms of biological role, metallophosphoesterase that catalyzes the removal of a side-chain ethanolamine-phosphate (EtNP) from the second mannose of the GPI-anchor protein intermediate. Participates in the glycan remodeling steps of GPI-anchor maturation to allow an efficient transport of GPI-anchor proteins from the endoplasmic reticulum to the Golgi. The sequence is that of Metallophosphoesterase 1 from Cricetulus griseus (Chinese hamster).